The following is a 551-amino-acid chain: MNNTIINSLIGGDDFIKRSNVFAVDSQIPTLYMPQYISLSGVMTNDGPDNQAIASFEIRDQYITALNHLVLSLELPEVKGMGRFGYVPYVGYKCINHVSVSSCNGVIWEIEGEELYNNCINNTIALKHSGYSSELNDISIGLTPNDTIKEPSTVYVYIKTPFDVEDTFSSLKLSDSKITVTVTFNPVSDIVIRDSSFDFETFNKEFVYVPELSFIGYMVKNVQIKPSFIEKPRRVIGQINQPTATVTEVHAATSLSVYTKPYYGNTDNKFISYPGYSQDEKDYIDAYVSRLLDDLVIVSDGPPTGYPESAEIVEVPEDGVVSIQDADVYVKIDNVPDNMSVYLHTNLLMFGTRKNSFIYNISKKFSAITGTYSDATKRTVFAHISHTINIIDTSIPVSLWTSQRNVYNGDNRSAESKAKDLFINDPFIKGIDFKNKTDIISRLEVRFGNDVLYSENGPISRIYNELLTKSNNGTRTLTFNFTPKIFFRPTTITANVSRGKDKLSVRVVYSTMDINHPIYYVQKQLVVVCNDLYKVSYDQGVSITKIMGDNN.

The protein belongs to the orthopoxvirus protein OPG125 family. In terms of assembly, interacts with the late transcription elongation factor VLTF-4/OPG110. Interacts with the late transcription factors VLTF-1.

Its subcellular location is the membrane. In terms of biological role, acts with RNA polymerase to initiate transcription from late gene promoters. In Monkeypox virus, this protein is Scaffold protein OPG125 (OPG125).